Reading from the N-terminus, the 407-residue chain is Tryptophan synthase beta chain (407 aa).

Over residues 1 to 11 the composition is skewed to polar residues; sequence MSTAPSQQHAS. Residues 1 to 25 are disordered; that stretch reads MSTAPSQQHASAQVPDPRGRFGDFG. An N6-(pyridoxal phosphate)lysine modification is found at Lys-100.

Belongs to the TrpB family. Tetramer of two alpha and two beta chains. It depends on pyridoxal 5'-phosphate as a cofactor.

It catalyses the reaction (1S,2R)-1-C-(indol-3-yl)glycerol 3-phosphate + L-serine = D-glyceraldehyde 3-phosphate + L-tryptophan + H2O. The protein operates within amino-acid biosynthesis; L-tryptophan biosynthesis; L-tryptophan from chorismate: step 5/5. In terms of biological role, the beta subunit is responsible for the synthesis of L-tryptophan from indole and L-serine. This chain is Tryptophan synthase beta chain, found in Rhodopirellula baltica (strain DSM 10527 / NCIMB 13988 / SH1).